The following is a 185-amino-acid chain: Ribose 1,5-bisphosphate phosphokinase PhnN (185 aa).

It belongs to the ribose 1,5-bisphosphokinase family.

The enzyme catalyses alpha-D-ribose 1,5-bisphosphate + ATP = 5-phospho-alpha-D-ribose 1-diphosphate + ADP. It participates in metabolic intermediate biosynthesis; 5-phospho-alpha-D-ribose 1-diphosphate biosynthesis; 5-phospho-alpha-D-ribose 1-diphosphate from D-ribose 5-phosphate (route II): step 3/3. Its function is as follows. Catalyzes the phosphorylation of ribose 1,5-bisphosphate to 5-phospho-D-ribosyl alpha-1-diphosphate (PRPP). The protein is Ribose 1,5-bisphosphate phosphokinase PhnN of Escherichia coli (strain SMS-3-5 / SECEC).